Reading from the N-terminus, the 614-residue chain is GPI transamidase component GAA1 (614 aa).

Topologically, residues 1-19 (MALLEKLHRRIVDMGLVPR) are cytoplasmic. A helical membrane pass occupies residues 20-40 (IIALLPVISMLCALFGFISIA). Residues 41-356 (ILPMDGQYRR…APRQFVSISS (316 aa)) lie on the Lumenal side of the membrane. N-linked (GlcNAc...) asparagine glycosylation is present at asparagine 87. Residues 357 to 377 (YLPSAVALSIAFAISSLNAFI) traverse the membrane as a helical segment. Over 378–394 (NNAYANISLFSEYNLVA) the chain is Cytoplasmic. Residues 395 to 415 (LLVWFVSLVISFVVSQAFLLI) form a helical membrane-spanning segment. The Lumenal segment spans residues 416–464 (PSSGLLMTISMASCFLPLILSRKIHISEPLSYRLKNVAFLYFSLVSTSL). The helical transmembrane segment at 465–485 (LMINFAMALLIGTLAFPMTFV) threads the bilayer. The Cytoplasmic segment spans residues 486–535 (KTIVESSSEHEVTTQSSNPIKTEPKDEIELVENHMDTTPATPQQQKQKLK). Residues 536-556 (NLVLLILTNPFISITLFGLFF) form a helical membrane-spanning segment. Residues 557-577 (DDEFHGFDIINKLVSAWLDLK) are Lumenal-facing. A helical membrane pass occupies residues 578–598 (CWSWFVLCIGWLPCWLLILAS). At 599–614 (SFESKSVVVRSKEKQS) the chain is on the cytoplasmic side. Positions 610–614 (KEKQS) match the Prevents secretion from ER motif.

Forms a complex with CDC91, GPI17, GPI16 and GPI8.

The protein localises to the endoplasmic reticulum membrane. It participates in glycolipid biosynthesis; glycosylphosphatidylinositol-anchor biosynthesis. Functionally, component of the GPI transamidase complex. Required for a terminal step of GPI anchor attachment onto proteins. Affects endocytosis. The protein is GPI transamidase component GAA1 (GAA1) of Saccharomyces cerevisiae (strain ATCC 204508 / S288c) (Baker's yeast).